A 110-amino-acid polypeptide reads, in one-letter code: Large ribosomal subunit protein uL22 (110 aa).

Belongs to the universal ribosomal protein uL22 family. In terms of assembly, part of the 50S ribosomal subunit.

Its function is as follows. This protein binds specifically to 23S rRNA; its binding is stimulated by other ribosomal proteins, e.g. L4, L17, and L20. It is important during the early stages of 50S assembly. It makes multiple contacts with different domains of the 23S rRNA in the assembled 50S subunit and ribosome. Functionally, the globular domain of the protein is located near the polypeptide exit tunnel on the outside of the subunit, while an extended beta-hairpin is found that lines the wall of the exit tunnel in the center of the 70S ribosome. The chain is Large ribosomal subunit protein uL22 from Pasteurella multocida (strain Pm70).